The primary structure comprises 386 residues: Protein DOM34 (386 aa).

It belongs to the eukaryotic release factor 1 family. Pelota subfamily. In terms of assembly, monomer. Component of the Dom34-Hbs1 complex, also named Pelota-HBS1L complex, composed of DOM34 and HBS1. A divalent metal cation serves as cofactor.

It is found in the cytoplasm. In terms of biological role, component of the Dom34-Hbs1 complex, a complex that recognizes stalled ribosomes and triggers the No-Go Decay (NGD) pathway. In the Dom34-Hbs1 complex, DOM34 recognizes ribosomes stalled at the 3' end of an mRNA and engages stalled ribosomes by destabilizing mRNA in the mRNA channel. Following ribosome-binding, the Dom34-Hbs1 complex promotes the disassembly of stalled ribosomes, followed by degradation of damaged mRNAs as part of the NGD pathway. The Dom34-Hbs1 complex is also involved in non-functional rRNA decay. This chain is Protein DOM34, found in Saccharomyces cerevisiae (strain ATCC 204508 / S288c) (Baker's yeast).